A 153-amino-acid polypeptide reads, in one-letter code: MSQDHSVSKRLQSELMNLMMGPSPGISAFPDGDNIFNWIGTIQGAKDTVYEQMEFKMSLKFPTDYPYKPPTVKFETQCFHPNVDNNGNICLDILKDKWSPVYNVRSLLISIQSLLGEPNNESPLNSYAASLWSNQDEYKKVLDKRYQEATSRP.

The region spanning Ser-6–Pro-153 is the UBC core domain. Cys-90 serves as the catalytic Glycyl thioester intermediate.

It belongs to the ubiquitin-conjugating enzyme family. As to quaternary structure, component of the APC/C complex. Post-translationally, autoubiquitinated by the APC/C complex, leading to its degradation by the proteasome.

The enzyme catalyses S-ubiquitinyl-[E1 ubiquitin-activating enzyme]-L-cysteine + [E2 ubiquitin-conjugating enzyme]-L-cysteine = [E1 ubiquitin-activating enzyme]-L-cysteine + S-ubiquitinyl-[E2 ubiquitin-conjugating enzyme]-L-cysteine.. The protein operates within protein modification; protein ubiquitination. In terms of biological role, catalyzes the covalent attachment of ubiquitin to other proteins. Acts as an essential factor of the anaphase promoting complex/cyclosome (APC/C), a cell cycle-regulated ubiquitin ligase that controls progression through mitosis. Acts by initiating polyubiquitin chains on APC/C substrates, leading to the degradation of APC/C substrates by the proteasome and promoting mitotic exit. In Dictyostelium discoideum (Social amoeba), this protein is Probable ubiquitin-conjugating enzyme E2 C (ube2c).